We begin with the raw amino-acid sequence, 316 residues long: BTB/POZ domain-containing adapter for CUL3-mediated RhoA degradation protein 2 (316 aa).

The region spanning K28–Q96 is the BTB domain. The span at E268–P279 shows a compositional bias: polar residues. The tract at residues E268 to E287 is disordered. S278 is modified (phosphoserine). S280 is subject to Phosphoserine; by CK2.

It belongs to the BACURD family. As to quaternary structure, component of the BCR(TNFAIP1) E3 ubiquitin ligase complex, at least composed of CUL3, TNFAIP1/BACURD2 and RBX1. Interacts with RHOA; with a preference for RhoA-GDP. Interacts with RHOB. Interacts with PCNA. Interacts with CSNK2B. In terms of processing, phosphorylation at Ser-280 by CK2 facilitates the nucleus localization and increases interaction with PCNA.

The protein resides in the cytoplasm. The protein localises to the nucleus. It is found in the endosome. It functions in the pathway protein modification; protein ubiquitination. Substrate-specific adapter of a BCR (BTB-CUL3-RBX1) E3 ubiquitin-protein ligase complex involved in regulation of cytoskeleton structure. The BCR(TNFAIP1) E3 ubiquitin ligase complex mediates the ubiquitination of RHOA, leading to its degradation by the proteasome, thereby regulating the actin cytoskeleton and cell migration. Its interaction with RHOB may regulate apoptosis. May enhance the PCNA-dependent DNA polymerase delta activity. This is BTB/POZ domain-containing adapter for CUL3-mediated RhoA degradation protein 2 (TNFAIP1) from Homo sapiens (Human).